The primary structure comprises 257 residues: tRNA pseudouridine synthase A (257 aa).

Asp53 serves as the catalytic Nucleophile. A substrate-binding site is contributed by Tyr111.

This sequence belongs to the tRNA pseudouridine synthase TruA family. As to quaternary structure, homodimer.

It catalyses the reaction uridine(38/39/40) in tRNA = pseudouridine(38/39/40) in tRNA. Its function is as follows. Formation of pseudouridine at positions 38, 39 and 40 in the anticodon stem and loop of transfer RNAs. The chain is tRNA pseudouridine synthase A from Xylella fastidiosa (strain M23).